Here is a 72-residue protein sequence, read N- to C-terminus: MSKEEAIEVEGTVIEPLPNAMFRVELENGHVVLAHISGKMRKYFIKILPGDKVTVELSPYDLTRGRITYRAK.

The S1-like domain maps to 1–72 (MSKEEAIEVE…TRGRITYRAK (72 aa)).

Belongs to the IF-1 family. As to quaternary structure, component of the 30S ribosomal translation pre-initiation complex which assembles on the 30S ribosome in the order IF-2 and IF-3, IF-1 and N-formylmethionyl-tRNA(fMet); mRNA recruitment can occur at any time during PIC assembly.

Its subcellular location is the cytoplasm. In terms of biological role, one of the essential components for the initiation of protein synthesis. Stabilizes the binding of IF-2 and IF-3 on the 30S subunit to which N-formylmethionyl-tRNA(fMet) subsequently binds. Helps modulate mRNA selection, yielding the 30S pre-initiation complex (PIC). Upon addition of the 50S ribosomal subunit IF-1, IF-2 and IF-3 are released leaving the mature 70S translation initiation complex. The polypeptide is Translation initiation factor IF-1 (Geobacter sulfurreducens (strain ATCC 51573 / DSM 12127 / PCA)).